The primary structure comprises 490 residues: One cut domain family member 3 (490 aa).

3 disordered regions span residues Gly130 to Ala155, Leu193 to Pro213, and His287 to Glu316. The segment covering Ala143–Gln152 has biased composition (pro residues). Residues His290–Ala311 are compositionally biased toward gly residues. A DNA-binding region (CUT) is located at residues Pro309–Ala395. Positions Pro411–Trp470 form a DNA-binding region, homeobox.

Belongs to the CUT homeobox family. In terms of tissue distribution, specifically expressed in brain, stomach and gut. Within the gut, expressed only in duodenum and jejunum.

It is found in the nucleus. Functionally, transcriptional activator. Binds the consensus DNA sequence 5'-DHWATTGAYTWWD-3' on a variety of gene promoters such as those of HNF3B and TTR. This chain is One cut domain family member 3 (Onecut3), found in Mus musculus (Mouse).